Here is a 468-residue protein sequence, read N- to C-terminus: 6-phospho-beta-galactosidase (468 aa).

Residues Q19, H116, N159, E160, and N297 each coordinate D-galactose 6-phosphate. The Proton donor role is filled by E160. E375 functions as the Nucleophile in the catalytic mechanism. Residues S428, W429, K435, and Y437 each contribute to the D-galactose 6-phosphate site.

This sequence belongs to the glycosyl hydrolase 1 family.

It catalyses the reaction a 6-phospho-beta-D-galactoside + H2O = D-galactose 6-phosphate + an alcohol. Its pathway is carbohydrate metabolism; lactose degradation; D-galactose 6-phosphate and beta-D-glucose from lactose 6-phosphate: step 1/1. This Streptococcus agalactiae serotype III (strain NEM316) protein is 6-phospho-beta-galactosidase.